A 413-amino-acid polypeptide reads, in one-letter code: Chloramphenicol efflux pump Rv0191 (413 aa).

12 helical membrane-spanning segments follow: residues 23–43, 55–75, 89–109, 110–130, 150–170, 176–196, 226–246, 256–276, 286–306, 312–332, 353–373, and 378–398; these read LSVL…PVGA, VVLV…TTVP, LVVS…APNF, AVLA…WAVI, IYIG…AMSL, LAAV…RLAL, VLTM…VVII, NLAW…PLVA, AVIV…ALAF, AATA…ATAV, GLYV…GGLL, and LAMM…GMTV.

Belongs to the major facilitator superfamily.

It localises to the cell membrane. Its activity is regulated as follows. Inhibited by the drug efflux pump inhibitors verapamil, resperine, piperine, chlorpromazine and carbonyl cyanide m-chlorophenylhydrazone (CCCP). Active efflux pump that plays an important role in chloramphenicol resistance. Overexpression causes pyrazinamide resistance. The protein is Chloramphenicol efflux pump Rv0191 of Mycobacterium tuberculosis (strain ATCC 25618 / H37Rv).